A 121-amino-acid polypeptide reads, in one-letter code: Chorion protein S15 (121 aa).

The first 18 residues, 1-18 (MKYLFVCVSLALFAYISA), serve as a signal peptide directing secretion.

Belongs to the chorion protein S15/S18 family.

The protein resides in the secreted. In terms of biological role, chorion membrane (egg shell) protein; plays a role in protecting the egg from the environment. In Drosophila subobscura (Fruit fly), this protein is Chorion protein S15 (Cp15).